The chain runs to 277 residues: 4-hydroxy-tetrahydrodipicolinate reductase (277 aa).

Residues Gly10–Met15 and Glu36 contribute to the NAD(+) site. Arg37 lines the NADP(+) pocket. NAD(+)-binding positions include Gly100–Thr102 and Ser124–Met127. The active-site Proton donor/acceptor is His158. Position 159 (His159) interacts with (S)-2,3,4,5-tetrahydrodipicolinate. Lys162 functions as the Proton donor in the catalytic mechanism. Position 168-169 (Gly168–Thr169) interacts with (S)-2,3,4,5-tetrahydrodipicolinate.

This sequence belongs to the DapB family.

Its subcellular location is the cytoplasm. The enzyme catalyses (S)-2,3,4,5-tetrahydrodipicolinate + NAD(+) + H2O = (2S,4S)-4-hydroxy-2,3,4,5-tetrahydrodipicolinate + NADH + H(+). It carries out the reaction (S)-2,3,4,5-tetrahydrodipicolinate + NADP(+) + H2O = (2S,4S)-4-hydroxy-2,3,4,5-tetrahydrodipicolinate + NADPH + H(+). Its pathway is amino-acid biosynthesis; L-lysine biosynthesis via DAP pathway; (S)-tetrahydrodipicolinate from L-aspartate: step 4/4. Catalyzes the conversion of 4-hydroxy-tetrahydrodipicolinate (HTPA) to tetrahydrodipicolinate. The protein is 4-hydroxy-tetrahydrodipicolinate reductase of Chelativorans sp. (strain BNC1).